The following is a 397-amino-acid chain: LIM/homeobox protein Lhx9 (397 aa).

2 consecutive LIM zinc-binding domains span residues 69-130 (ALCA…RFSV) and 131-193 (QRCA…LLQG). Disordered regions lie at residues 248–272 (ENEA…RMRT), 330–364 (ENGG…TLTD), and 378–397 (SNMD…TNLF). The homeobox DNA-binding region spans 267-326 (TKRMRTSFKHHQLRTMKSYFAINHNPDAKDLKQLAQKTGLTKRVLQVWFQNARAKFRRNL). Residues 353–364 (LTPPGTATTLTD) show a composition bias toward low complexity.

In terms of assembly, interacts with LDB1 and LDB2.

It localises to the nucleus. In terms of biological role, involved in gonadal development. The polypeptide is LIM/homeobox protein Lhx9 (LHX9) (Homo sapiens (Human)).